The sequence spans 400 residues: Tryptophan synthase beta chain (400 aa).

Lysine 92 carries the post-translational modification N6-(pyridoxal phosphate)lysine.

It belongs to the TrpB family. In terms of assembly, tetramer of two alpha and two beta chains. It depends on pyridoxal 5'-phosphate as a cofactor.

The catalysed reaction is (1S,2R)-1-C-(indol-3-yl)glycerol 3-phosphate + L-serine = D-glyceraldehyde 3-phosphate + L-tryptophan + H2O. The protein operates within amino-acid biosynthesis; L-tryptophan biosynthesis; L-tryptophan from chorismate: step 5/5. Functionally, the beta subunit is responsible for the synthesis of L-tryptophan from indole and L-serine. The polypeptide is Tryptophan synthase beta chain (Neisseria meningitidis serogroup A / serotype 4A (strain DSM 15465 / Z2491)).